Here is a 298-residue protein sequence, read N- to C-terminus: Inosose dehydratase (298 aa).

It belongs to the IolE/MocC family. Glutathione serves as cofactor. Requires Co(2+) as cofactor. Mn(2+) is required as a cofactor.

The enzyme catalyses scyllo-inosose = 3D-3,5/4-trihydroxycyclohexane-1,2-dione + H2O. Catalyzes the dehydration of inosose (2-keto-myo-inositol, 2KMI or 2,4,6/3,5-pentahydroxycyclohexanone) to 3D-(3,5/4)-trihydroxycyclohexane-1,2-dione (D-2,3-diketo-4-deoxy-epi-inositol). The protein is Inosose dehydratase of Erwinia tasmaniensis (strain DSM 17950 / CFBP 7177 / CIP 109463 / NCPPB 4357 / Et1/99).